The primary structure comprises 541 residues: uncharacterized protein (541 aa).

Helical transmembrane passes span 10-32 (LNNQ…KINI), 39-57 (SSAI…YTLP), 62-84 (TLGL…FFSL), 91-113 (LSLG…TYLF), and 146-168 (APAA…IQII). RCK C-terminal domains are found at residues 183 to 260 (LNKE…DDLE) and 268 to 352 (TPVD…IFGN). The next 6 membrane-spanning stretches (helical) occupy residues 357-375 (SYNF…GFIL), 385-407 (SGIF…SNIY), 428-447 (GLVL…ILAT), 452-474 (GLQL…VFIC), 481-500 (PFLS…PGLA), and 515-537 (YATV…IFIV).

It belongs to the AAE transporter (TC 2.A.81) family.

The protein resides in the cell membrane. This is an uncharacterized protein from Desulfotalea psychrophila (strain LSv54 / DSM 12343).